Here is a 462-residue protein sequence, read N- to C-terminus: UDP-N-acetylmuramoylalanine--D-glutamate ligase (462 aa).

112–118 serves as a coordination point for ATP; it reads GTNGKTT.

Belongs to the MurCDEF family.

The protein resides in the cytoplasm. The catalysed reaction is UDP-N-acetyl-alpha-D-muramoyl-L-alanine + D-glutamate + ATP = UDP-N-acetyl-alpha-D-muramoyl-L-alanyl-D-glutamate + ADP + phosphate + H(+). Its pathway is cell wall biogenesis; peptidoglycan biosynthesis. Its function is as follows. Cell wall formation. Catalyzes the addition of glutamate to the nucleotide precursor UDP-N-acetylmuramoyl-L-alanine (UMA). This Nostoc sp. (strain PCC 7120 / SAG 25.82 / UTEX 2576) protein is UDP-N-acetylmuramoylalanine--D-glutamate ligase.